A 205-amino-acid polypeptide reads, in one-letter code: Ribonuclease HII (205 aa).

One can recognise an RNase H type-2 domain in the interval 13-205; that stretch reads TIVAGVDEVG…APVKYMLSMC (193 aa). A divalent metal cation-binding residues include D19, E20, and D114.

It belongs to the RNase HII family. It depends on Mn(2+) as a cofactor. Requires Mg(2+) as cofactor.

It localises to the cytoplasm. It catalyses the reaction Endonucleolytic cleavage to 5'-phosphomonoester.. In terms of biological role, endonuclease that specifically degrades the RNA of RNA-DNA hybrids. This chain is Ribonuclease HII, found in Blochmanniella floridana.